The primary structure comprises 474 residues: B-cell CLL/lymphoma 6 member B protein (474 aa).

The region spanning 38 to 105 (TDVTLLVGGQ…MYTSRLRLSP (68 aa)) is the BTB domain. Disordered regions lie at residues 144–190 (PVEV…PDPK) and 210–249 (GSLV…GLQS). The segment covering 150–160 (PRPPTVAPPGS) has biased composition (pro residues). A compositionally biased stretch (basic and acidic residues) spans 162–172 (RRSEGHPDPPT). 3 stretches are compositionally biased toward polar residues: residues 173-183 (ESRSCSQGSPS), 210-220 (GSLVGESSGQP), and 240-249 (EEGTTPGLQS). C2H2-type zinc fingers lie at residues 323 to 345 (YKCQ…RTVH), 351 to 373 (YRCS…SRIH), 379 to 401 (YKCE…VLIH), 407 to 429 (YPCP…VRIH), and 435 to 458 (YHCD…RQKH).

In terms of assembly, associates with BCL6 through the BTB domain. In terms of tissue distribution, ubiquitously expressed with higher expression found in heart and lung.

Its subcellular location is the nucleus. Acts as a sequence-specific transcriptional repressor in association with BCL6. Necessary for activation of naive T-cells to antigenic stimulation. May attenuate the regulatory effect of BCL6 on antigenic activation of naive CD4 T-cells by forming a heterodimer with BCL6. This is B-cell CLL/lymphoma 6 member B protein (Bcl6b) from Mus musculus (Mouse).